The sequence spans 141 residues: Translation initiation factor 2 subunit beta (141 aa).

This sequence belongs to the eIF-2-beta/eIF-5 family. Heterotrimer composed of an alpha, a beta and a gamma chain.

Functionally, eIF-2 functions in the early steps of protein synthesis by forming a ternary complex with GTP and initiator tRNA. This is Translation initiation factor 2 subunit beta from Thermofilum pendens (strain DSM 2475 / Hrk 5).